Reading from the N-terminus, the 1173-residue chain is BRCA2-interacting transcriptional repressor EMSY (1173 aa).

The ENT domain occupies 16–100 (CKRILRKLEL…EWSIEGRRLV (85 aa)). Residues 149 to 177 (STTSTPPSASAPSSSSAAVKSPRPASPAS) show a composition bias toward low complexity. 7 disordered regions span residues 149-179 (STTS…ASNV), 191-216 (KSVS…SSPV), 676-720 (NRSA…DAPP), 797-816 (SAEQ…ESDA), 905-998 (RVCE…GAQV), 1020-1046 (PRAP…EKPS), and 1139-1173 (DYTS…DQSQ). The segment covering 683–693 (TTSTHTSAAAA) has biased composition (low complexity). Low complexity-rich tracts occupy residues 911 to 921 (SSSSSSSSSSS) and 937 to 953 (SSSS…TPHT). Polar residues-rich tracts occupy residues 961–976 (QAPT…TQLS) and 989–998 (SSKTSSGAQV). The span at 1025-1040 (SSSSSSEAALKLQAES) shows a compositional bias: low complexity. Residues 1148-1159 (EQAMEQEVDSSN) are compositionally biased toward acidic residues.

As to quaternary structure, homodimer.

The protein resides in the nucleus. In terms of biological role, regulator which is able to repress transcription, possibly via its interaction with a multiprotein chromatin remodeling complex that modifies the chromatin. This Danio rerio (Zebrafish) protein is BRCA2-interacting transcriptional repressor EMSY.